Here is a 96-residue protein sequence, read N- to C-terminus: Aspartyl/glutamyl-tRNA(Asn/Gln) amidotransferase subunit C (96 aa).

It belongs to the GatC family. As to quaternary structure, heterotrimer of A, B and C subunits.

The enzyme catalyses L-glutamyl-tRNA(Gln) + L-glutamine + ATP + H2O = L-glutaminyl-tRNA(Gln) + L-glutamate + ADP + phosphate + H(+). The catalysed reaction is L-aspartyl-tRNA(Asn) + L-glutamine + ATP + H2O = L-asparaginyl-tRNA(Asn) + L-glutamate + ADP + phosphate + 2 H(+). Allows the formation of correctly charged Asn-tRNA(Asn) or Gln-tRNA(Gln) through the transamidation of misacylated Asp-tRNA(Asn) or Glu-tRNA(Gln) in organisms which lack either or both of asparaginyl-tRNA or glutaminyl-tRNA synthetases. The reaction takes place in the presence of glutamine and ATP through an activated phospho-Asp-tRNA(Asn) or phospho-Glu-tRNA(Gln). This is Aspartyl/glutamyl-tRNA(Asn/Gln) amidotransferase subunit C from Sulfurimonas denitrificans (strain ATCC 33889 / DSM 1251) (Thiomicrospira denitrificans (strain ATCC 33889 / DSM 1251)).